The following is a 224-amino-acid chain: Urease accessory protein UreF (224 aa).

Belongs to the UreF family. UreD, UreF and UreG form a complex that acts as a GTP-hydrolysis-dependent molecular chaperone, activating the urease apoprotein by helping to assemble the nickel containing metallocenter of UreC. The UreE protein probably delivers the nickel.

Its subcellular location is the cytoplasm. Functionally, required for maturation of urease via the functional incorporation of the urease nickel metallocenter. The chain is Urease accessory protein UreF from Pseudomonas savastanoi pv. phaseolicola (strain 1448A / Race 6) (Pseudomonas syringae pv. phaseolicola (strain 1448A / Race 6)).